The following is a 276-amino-acid chain: Proteasome chaperone 1 (276 aa).

The protein belongs to the PSMG1 family. In terms of assembly, component of the 20S proteasome chaperone. Forms a heterodimer with ADD66 that binds to proteasome precursors.

It localises to the cytoplasm. In terms of biological role, involved in 20S proteasome assembly. In Saccharomyces cerevisiae (strain ATCC 204508 / S288c) (Baker's yeast), this protein is Proteasome chaperone 1 (PBA1).